The following is a 1179-amino-acid chain: Putative ankyrin repeat protein RF_0381 (1179 aa).

ANK repeat units follow at residues 282–311 (NGYQ…MHRQ), 604–633 (NKDQ…NPNA), 637–666 (HGVI…DVNA), 670–699 (NGET…NIHA), 703–732 (NGET…DVNA), 736–765 (NGLT…DVNA), 769–798 (SGET…DVNA), 802–831 (NGET…NVNN), 833–860 (KTIL…DIHA), 864–893 (SGET…DIHA), 897–926 (SGET…DIHA), 930–959 (SGET…DIHA), 963–992 (SGET…DINT), 996–1025 (DGLT…DVNA), 1029–1058 (SGET…DVNA), 1062–1091 (DGLT…DVNA), 1095–1124 (SGET…DINT), and 1128–1157 (SGET…DINL).

This chain is Putative ankyrin repeat protein RF_0381, found in Rickettsia felis (strain ATCC VR-1525 / URRWXCal2) (Rickettsia azadi).